The primary structure comprises 450 residues: Immunoglobulin G-binding protein A (450 aa).

The signal sequence occupies residues 1–36; sequence MKKKNIYSIRKLGVGIASVTLGTLLISGGVTPAANA. Residues 7–18 carry the YSIRK-G/S signaling motif motif; that stretch reads YSIRKLGVGIAS. The stretch at 37-92 is one Immunoglobulin-binding region E repeat; sequence AQHDEAQQNAFYQVLNMPNLNADQRNGFIQSLKDDPSQSANVLGEAQKLNDSQAPK. The Immunoglobulin-binding region D repeat unit spans residues 93 to 153; that stretch reads ADAQQNNFNK…KKLNESQAPK (61 aa). The stretch at 154 to 211 is one Immunoglobulin-binding region A repeat; sequence ADNNFNKEQQNAFYEILNMPNLNEEQRNGFIQSLKDDPSQSANLLSEAKKLNESQAPK. An Immunoglobulin-binding region B/C repeat occupies 212–269; that stretch reads ADNKFNKEQQNAFYEILHLPNLNEEQRNGFIQSLKDDPSVSKEILAEAKKLNDAQAPK. The span at 260-354 shows a compositional bias: basic and acidic residues; sequence KKLNDAQAPK…GNKPGKEDGN (95 aa). Disordered regions lie at residues 260–365 and 401–421; these read KKLN…GDTV and KKQP…ETGE. A run of 11 repeats spans residues 268-275, 276-283, 284-291, 292-299, 300-307, 308-315, 316-323, 324-331, 332-339, 340-347, and 348-355. Positions 268–355 are 12 X 8 AA approximate tandem repeats; that stretch reads PKEEDNKKPG…NKPGKEDGNG (88 aa). Positions 355–399 constitute a LysM domain; that stretch reads GVHVVKPGDTVNDIAKANGTTADKIAADNKLADKNMIKPGQELVV. Residues 416–420 carry the LPXTG sorting signal motif; the sequence is LPETG. The residue at position 419 (threonine 419) is a Pentaglycyl murein peptidoglycan amidated threonine. Residues 420-450 constitute a propeptide, removed by sortase; it reads GEENPFIGTTVFGGLSLALGAALLAGRRREL.

The protein belongs to the immunoglobulin-binding protein SpA family. In terms of assembly, interacts with host TNFRSF1A; this interaction leads to the stimulation of both surface expression and shedding of TNFRSF1A.

Its subcellular location is the secreted. It localises to the cell wall. Its function is as follows. Plays a role in the inhibition of the host innate and adaptive immune responses. Possesses five immunoglobulin-binding domains that capture both the fragment crystallizable region (Fc region) and the Fab region (part of Ig that identifies antigen) of immunoglobulins. In turn, Staphylococcus aureus is protected from phagocytic killing via inhibition of Ig Fc region. In addition, the host elicited B-cell response is prevented due to a decrease of antibody-secreting cell proliferation that enter the bone marrow, thereby decreasing long-term antibody production. Inhibits osteogenesis by preventing osteoblast proliferation and expression of alkaline phosphatase, type I collagen, osteopontin and osteocalcin. Acts directly as a pro-inflammatory factor in the lung through its ability to bind and activate tumor necrosis factor alpha receptor 1/TNFRSF1A. The chain is Immunoglobulin G-binding protein A (spa) from Staphylococcus aureus (strain Mu50 / ATCC 700699).